Consider the following 715-residue polypeptide: Dynein axonemal intermediate chain 7 (715 aa).

The disordered stretch occupies residues 291–322 (AVSKDLQEENKQENESNSVHEEETKAEGQGDV). Residues 295–318 (DLQEENKQENESNSVHEEETKAEG) show a composition bias toward basic and acidic residues.

This sequence belongs to the DNAI7 family. In terms of assembly, part of the multisubunit axonemal dynein complex formed at least of two heavy chains and a number of intermediate and light chains. Associates with tubulin. Interacts with microtubule. Ubiquitinated. Ubiquitination leads to its degradation through the 26S proteasome. Ubiquitin-proteasome-mediated DNAI7 degradation occurs in mitosis.

Its subcellular location is the cell projection. The protein localises to the cilium. It is found in the cytoplasm. Its function is as follows. Via its association with the multisubunit axonemal dynein complex, is potentially involved in the regulation of cilia function. May act as a cell cycle regulator. This chain is Dynein axonemal intermediate chain 7, found in Bos taurus (Bovine).